The chain runs to 223 residues: Endonuclease V (223 aa).

Residues Asp35 and Asp103 each contribute to the Mg(2+) site.

The protein belongs to the endonuclease V family. Requires Mg(2+) as cofactor.

It localises to the cytoplasm. The catalysed reaction is Endonucleolytic cleavage at apurinic or apyrimidinic sites to products with a 5'-phosphate.. Functionally, DNA repair enzyme involved in the repair of deaminated bases. Selectively cleaves double-stranded DNA at the second phosphodiester bond 3' to a deoxyinosine leaving behind the intact lesion on the nicked DNA. The chain is Endonuclease V from Salmonella schwarzengrund (strain CVM19633).